A 477-amino-acid polypeptide reads, in one-letter code: Diphthine methyltransferase (477 aa).

WD repeat units lie at residues 194-232 (HFEA…TPVF), 236-276 (RHCM…QPLA), and 422-464 (VKTR…ARTL).

This sequence belongs to the DPH7 family. In terms of assembly, interacts with INCA1.

It catalyses the reaction diphthine methyl ester-[translation elongation factor 2] + H2O = diphthine-[translation elongation factor 2] + methanol + H(+). It functions in the pathway protein modification; peptidyl-diphthamide biosynthesis. Catalyzes the demethylation of diphthine methyl ester to form diphthine, an intermediate diphthamide biosynthesis, a post-translational modification of histidine which occurs in translation elongation factor 2 (EEF2). The protein is Diphthine methyltransferase (Dph7) of Mus musculus (Mouse).